Consider the following 156-residue polypeptide: Small ribosomal subunit protein uS7 (156 aa).

Belongs to the universal ribosomal protein uS7 family. In terms of assembly, part of the 30S ribosomal subunit. Contacts proteins S9 and S11.

Functionally, one of the primary rRNA binding proteins, it binds directly to 16S rRNA where it nucleates assembly of the head domain of the 30S subunit. Is located at the subunit interface close to the decoding center, probably blocks exit of the E-site tRNA. The sequence is that of Small ribosomal subunit protein uS7 from Burkholderia multivorans (strain ATCC 17616 / 249).